The following is a 495-amino-acid chain: Probable endopolygalacturonase D (495 aa).

A signal peptide spans 1–16 (MKRSALLASFLPLALG). A disulfide bridge connects residues Cys154 and Cys169. PbH1 repeat units follow at residues 261-283 (MYNS…EIEN), 284-322 (TEYL…DIKQ), and 323-344 (SDFL…AVTS). Asn295 carries N-linked (GlcNAc...) asparagine glycosylation. The active-site Proton donor is the Asp337. A disulfide bridge links Cys339 with Cys355. The active site involves His359. Residue Asn371 is glycosylated (N-linked (GlcNAc...) asparagine). 2 PbH1 repeats span residues 374–395 (VDGV…RIKS) and 403–425 (VYNV…DIQQ). N-linked (GlcNAc...) asparagine glycosylation is found at Asn410 and Asn444. 2 disulfides stabilise this stretch: Cys464–Cys469 and Cys487–Cys494. The stretch at 469–492 (CSNFVFTDVDITGGSDDSCNYPSS) is one PbH1 6 repeat.

This sequence belongs to the glycosyl hydrolase 28 family.

The protein resides in the secreted. It carries out the reaction (1,4-alpha-D-galacturonosyl)n+m + H2O = (1,4-alpha-D-galacturonosyl)n + (1,4-alpha-D-galacturonosyl)m.. In terms of biological role, involved in maceration and soft-rotting of plant tissue. Hydrolyzes the 1,4-alpha glycosidic bonds of de-esterified pectate in the smooth region of the plant cell wall. The polypeptide is Probable endopolygalacturonase D (pgaD) (Aspergillus niger (strain ATCC MYA-4892 / CBS 513.88 / FGSC A1513)).